Reading from the N-terminus, the 96-residue chain is Small ribosomal subunit protein bS18 (96 aa).

Basic and acidic residues predominate over residues 1-22; the sequence is MYKDVDSHQRDSRSDGHQDGFK. A disordered region spans residues 1-25; the sequence is MYKDVDSHQRDSRSDGHQDGFKKNP.

This sequence belongs to the bacterial ribosomal protein bS18 family. In terms of assembly, part of the 30S ribosomal subunit. Forms a tight heterodimer with protein bS6.

Binds as a heterodimer with protein bS6 to the central domain of the 16S rRNA, where it helps stabilize the platform of the 30S subunit. The sequence is that of Small ribosomal subunit protein bS18 from Borrelia hermsii (strain HS1 / DAH).